Reading from the N-terminus, the 158-residue chain is Large ribosomal subunit protein eL24 (158 aa).

Over residues 98–146 (LDASHKKAEAEKAVRELKQKKANDIEKKRADRKLQGKDVKAAKKAETKK) the composition is skewed to basic and acidic residues. The interval 98–158 (LDASHKKAEA…QPVGAKGGKK (61 aa)) is disordered.

The protein belongs to the eukaryotic ribosomal protein eL24 family.

This Tetrahymena thermophila (strain SB210) protein is Large ribosomal subunit protein eL24 (RPL24).